The following is a 395-amino-acid chain: 8-amino-7-oxononanoate synthase (395 aa).

Lys24 provides a ligand contact to substrate. 111–112 lines the pyridoxal 5'-phosphate pocket; that stretch reads GF. Substrate is bound at residue His136. Pyridoxal 5'-phosphate contacts are provided by residues Ser184, 209-212, and 240-243; these read DDAH and TLSK. N6-(pyridoxal phosphate)lysine is present on Lys243. Thr357 is a substrate binding site.

Belongs to the class-II pyridoxal-phosphate-dependent aminotransferase family. BioF subfamily. Homodimer. It depends on pyridoxal 5'-phosphate as a cofactor.

It carries out the reaction 6-carboxyhexanoyl-[ACP] + L-alanine + H(+) = (8S)-8-amino-7-oxononanoate + holo-[ACP] + CO2. The protein operates within cofactor biosynthesis; biotin biosynthesis. In terms of biological role, catalyzes the decarboxylative condensation of pimeloyl-[acyl-carrier protein] and L-alanine to produce 8-amino-7-oxononanoate (AON), [acyl-carrier protein], and carbon dioxide. The sequence is that of 8-amino-7-oxononanoate synthase from Treponema denticola (strain ATCC 35405 / DSM 14222 / CIP 103919 / JCM 8153 / KCTC 15104).